An 81-amino-acid chain; its full sequence is Photosystem I iron-sulfur center (81 aa).

2 4Fe-4S ferredoxin-type domains span residues 2–31 (SHSVKIYDTCIGCTQCVRACPTDVLEMIPW) and 39–68 (IASAPRTEDCVGCKRCESACPTDFLSVRVY). Cysteine 11, cysteine 14, cysteine 17, cysteine 21, cysteine 48, cysteine 51, cysteine 54, and cysteine 58 together coordinate [4Fe-4S] cluster.

The eukaryotic PSI reaction center is composed of at least 11 subunits. [4Fe-4S] cluster serves as cofactor.

Its subcellular location is the plastid. It localises to the chloroplast thylakoid membrane. The enzyme catalyses reduced [plastocyanin] + hnu + oxidized [2Fe-2S]-[ferredoxin] = oxidized [plastocyanin] + reduced [2Fe-2S]-[ferredoxin]. Its function is as follows. Apoprotein for the two 4Fe-4S centers FA and FB of photosystem I (PSI); essential for photochemical activity. FB is the terminal electron acceptor of PSI, donating electrons to ferredoxin. The C-terminus interacts with PsaA/B/D and helps assemble the protein into the PSI complex. Required for binding of PsaD and PsaE to PSI. PSI is a plastocyanin-ferredoxin oxidoreductase, converting photonic excitation into a charge separation, which transfers an electron from the donor P700 chlorophyll pair to the spectroscopically characterized acceptors A0, A1, FX, FA and FB in turn. This Phaseolus vulgaris (Kidney bean) protein is Photosystem I iron-sulfur center.